Reading from the N-terminus, the 87-residue chain is NADH dehydrogenase [ubiquinone] 1 alpha subcomplex subunit 4-like 2 (87 aa).

It belongs to the complex I NDUFA4 subunit family.

This Mus musculus (Mouse) protein is NADH dehydrogenase [ubiquinone] 1 alpha subcomplex subunit 4-like 2 (Ndufa4l2).